The primary structure comprises 91 residues: ATP synthase subunit c (91 aa).

Helical transmembrane passes span phenylalanine 4–isoleucine 24 and isoleucine 53–leucine 73.

It belongs to the ATPase C chain family. As to quaternary structure, F-type ATPases have 2 components, F(1) - the catalytic core - and F(0) - the membrane proton channel. F(1) has five subunits: alpha(3), beta(3), gamma(1), delta(1), epsilon(1). F(0) has three main subunits: a(1), b(2) and c(10-14). The alpha and beta chains form an alternating ring which encloses part of the gamma chain. F(1) is attached to F(0) by a central stalk formed by the gamma and epsilon chains, while a peripheral stalk is formed by the delta and b chains.

It localises to the cell inner membrane. Functionally, f(1)F(0) ATP synthase produces ATP from ADP in the presence of a proton or sodium gradient. F-type ATPases consist of two structural domains, F(1) containing the extramembraneous catalytic core and F(0) containing the membrane proton channel, linked together by a central stalk and a peripheral stalk. During catalysis, ATP synthesis in the catalytic domain of F(1) is coupled via a rotary mechanism of the central stalk subunits to proton translocation. Key component of the F(0) channel; it plays a direct role in translocation across the membrane. A homomeric c-ring of between 10-14 subunits forms the central stalk rotor element with the F(1) delta and epsilon subunits. The chain is ATP synthase subunit c from Geotalea uraniireducens (strain Rf4) (Geobacter uraniireducens).